The chain runs to 441 residues: Ribosomal protein uS12 methylthiotransferase RimO (441 aa).

An MTTase N-terminal domain is found at 8 to 118 (PKIGFVSLGC…VLQHVHHYVP (111 aa)). Residues cysteine 17, cysteine 53, cysteine 82, cysteine 150, cysteine 154, and cysteine 157 each contribute to the [4Fe-4S] cluster site. The Radical SAM core domain occupies 136–373 (LTPRHYAYLK…MQLQQQISAE (238 aa)). The region spanning 376–441 (QEKVGREILV…DEYDLWGSRV (66 aa)) is the TRAM domain.

The protein belongs to the methylthiotransferase family. RimO subfamily. [4Fe-4S] cluster is required as a cofactor.

It localises to the cytoplasm. The enzyme catalyses L-aspartate(89)-[ribosomal protein uS12]-hydrogen + (sulfur carrier)-SH + AH2 + 2 S-adenosyl-L-methionine = 3-methylsulfanyl-L-aspartate(89)-[ribosomal protein uS12]-hydrogen + (sulfur carrier)-H + 5'-deoxyadenosine + L-methionine + A + S-adenosyl-L-homocysteine + 2 H(+). Catalyzes the methylthiolation of an aspartic acid residue of ribosomal protein uS12. The sequence is that of Ribosomal protein uS12 methylthiotransferase RimO from Salmonella paratyphi A (strain ATCC 9150 / SARB42).